The primary structure comprises 284 residues: D-tagatose-1,6-bisphosphate aldolase subunit GatY (284 aa).

Residue Asp-82 is the Proton donor of the active site. Residues His-83 and His-180 each coordinate Zn(2+). Gly-181 contacts dihydroxyacetone phosphate. His-208 is a Zn(2+) binding site. Residues Gly-209–Ser-211 and Asn-230–Thr-233 contribute to the dihydroxyacetone phosphate site.

This sequence belongs to the class II fructose-bisphosphate aldolase family. TagBP aldolase GatY subfamily. Forms a complex with GatZ. Zn(2+) serves as cofactor.

The enzyme catalyses D-tagatofuranose 1,6-bisphosphate = D-glyceraldehyde 3-phosphate + dihydroxyacetone phosphate. The protein operates within carbohydrate metabolism; D-tagatose 6-phosphate degradation; D-glyceraldehyde 3-phosphate and glycerone phosphate from D-tagatose 6-phosphate: step 2/2. Its function is as follows. Catalytic subunit of the tagatose-1,6-bisphosphate aldolase GatYZ, which catalyzes the reversible aldol condensation of dihydroxyacetone phosphate (DHAP or glycerone-phosphate) with glyceraldehyde 3-phosphate (G3P) to produce tagatose 1,6-bisphosphate (TBP). Requires GatZ subunit for full activity and stability. Is involved in the catabolism of galactitol. The polypeptide is D-tagatose-1,6-bisphosphate aldolase subunit GatY (Escherichia coli O157:H7).